Here is a 128-residue protein sequence, read N- to C-terminus: Probable 4-amino-4-deoxy-L-arabinose-phosphoundecaprenol flippase subunit ArnF (128 aa).

Residues 1–2 (MC) lie on the Cytoplasmic side of the membrane. The helical transmembrane segment at 3–23 (LIWGLFSVIIASVAQLSLGFA) threads the bilayer. Topologically, residues 24–35 (ASHLPPMTHLWD) are periplasmic. The helical transmembrane segment at 36-56 (FIAALLAFGLDARILLLGLLG) threads the bilayer. At 57-76 (YLLSVFCWYKTLHKLALSKA) the chain is on the cytoplasmic side. A helical transmembrane segment spans residues 77–97 (YALLSMSYVLVWIASMVLPGW). At 98 to 100 (EGT) the chain is on the periplasmic side. A helical transmembrane segment spans residues 101–121 (FSLKALLGVACIMSGLMLIFL). Residues 122–128 (PTTKQRY) lie on the Cytoplasmic side of the membrane.

The protein belongs to the ArnF family. In terms of assembly, heterodimer of ArnE and ArnF.

It is found in the cell inner membrane. Its pathway is bacterial outer membrane biogenesis; lipopolysaccharide biosynthesis. Functionally, translocates 4-amino-4-deoxy-L-arabinose-phosphoundecaprenol (alpha-L-Ara4N-phosphoundecaprenol) from the cytoplasmic to the periplasmic side of the inner membrane. This Shigella flexneri protein is Probable 4-amino-4-deoxy-L-arabinose-phosphoundecaprenol flippase subunit ArnF.